The sequence spans 453 residues: tRNA modification GTPase MnmE (453 aa).

Residues R22, E79, and K119 each coordinate (6S)-5-formyl-5,6,7,8-tetrahydrofolate. In terms of domain architecture, TrmE-type G spans G215–G376. N225 is a K(+) binding site. GTP is bound by residues N225–S230, T244–T250, D269–G272, and N334–D337. S229 contributes to the Mg(2+) binding site. Positions 244, 246, and 249 each coordinate K(+). T250 serves as a coordination point for Mg(2+). K453 serves as a coordination point for (6S)-5-formyl-5,6,7,8-tetrahydrofolate.

Belongs to the TRAFAC class TrmE-Era-EngA-EngB-Septin-like GTPase superfamily. TrmE GTPase family. As to quaternary structure, homodimer. Heterotetramer of two MnmE and two MnmG subunits. The cofactor is K(+).

It localises to the cytoplasm. Its function is as follows. Exhibits a very high intrinsic GTPase hydrolysis rate. Involved in the addition of a carboxymethylaminomethyl (cmnm) group at the wobble position (U34) of certain tRNAs, forming tRNA-cmnm(5)s(2)U34. In Shewanella sediminis (strain HAW-EB3), this protein is tRNA modification GTPase MnmE.